We begin with the raw amino-acid sequence, 258 residues long: Venom plasminogen activator (258 aa).

Residues 1-18 (MVLIRVLANLLILQLSYA) form the signal peptide. Residues 19-24 (QKSSEL) constitute a propeptide that is removed on maturation. Residues 25 to 249 (VVGGDECNIN…YTDWIQSIIS (225 aa)) form the Peptidase S1 domain. 6 disulfides stabilise this stretch: C31-C163, C50-C66, C98-C256, C142-C210, C174-C189, and C200-C225. N44 carries an N-linked (GlcNAc...) asparagine glycan. Catalysis depends on charge relay system residues H65 and D110. S204 serves as the catalytic Charge relay system.

This sequence belongs to the peptidase S1 family. Snake venom subfamily. As to quaternary structure, monomer. As to expression, expressed by the venom gland.

The protein resides in the secreted. Its function is as follows. Snake venom serine protease that activates plasminogen. Shows a preferential cleavage at Arg-|-Xaa instead of Lys-|-Xaa bonds. The protein is Venom plasminogen activator of Agkistrodon piscivorus leucostoma (Western cottonmouth).